The chain runs to 400 residues: Argininosuccinate synthase (400 aa).

8–16 (AYSGGLDTS) provides a ligand contact to ATP. An L-citrulline-binding site is contributed by Tyr-85. Residue Gly-115 participates in ATP binding. L-aspartate is bound by residues Thr-117, Asn-121, and Asp-122. L-citrulline is bound at residue Asn-121. Arg-125, Ser-173, Glu-258, and Tyr-270 together coordinate L-citrulline.

It belongs to the argininosuccinate synthase family. Type 1 subfamily. In terms of assembly, homotetramer.

It localises to the cytoplasm. The catalysed reaction is L-citrulline + L-aspartate + ATP = 2-(N(omega)-L-arginino)succinate + AMP + diphosphate + H(+). The protein operates within amino-acid biosynthesis; L-arginine biosynthesis; L-arginine from L-ornithine and carbamoyl phosphate: step 2/3. This chain is Argininosuccinate synthase, found in Staphylococcus haemolyticus (strain JCSC1435).